The chain runs to 424 residues: Serine hydroxymethyltransferase (424 aa).

(6S)-5,6,7,8-tetrahydrofolate is bound by residues Leu113 and 117-119; that span reads GHL. N6-(pyridoxal phosphate)lysine is present on Lys222. 361–363 lines the (6S)-5,6,7,8-tetrahydrofolate pocket; that stretch reads SPF.

It belongs to the SHMT family. In terms of assembly, homodimer. Pyridoxal 5'-phosphate serves as cofactor.

It localises to the cytoplasm. It carries out the reaction (6R)-5,10-methylene-5,6,7,8-tetrahydrofolate + glycine + H2O = (6S)-5,6,7,8-tetrahydrofolate + L-serine. It functions in the pathway one-carbon metabolism; tetrahydrofolate interconversion. Its pathway is amino-acid biosynthesis; glycine biosynthesis; glycine from L-serine: step 1/1. In terms of biological role, catalyzes the reversible interconversion of serine and glycine with tetrahydrofolate (THF) serving as the one-carbon carrier. This reaction serves as the major source of one-carbon groups required for the biosynthesis of purines, thymidylate, methionine, and other important biomolecules. Also exhibits THF-independent aldolase activity toward beta-hydroxyamino acids, producing glycine and aldehydes, via a retro-aldol mechanism. This is Serine hydroxymethyltransferase from Flavobacterium johnsoniae (strain ATCC 17061 / DSM 2064 / JCM 8514 / BCRC 14874 / CCUG 350202 / NBRC 14942 / NCIMB 11054 / UW101) (Cytophaga johnsonae).